The primary structure comprises 186 residues: Peptidyl-tRNA hydrolase (186 aa).

A tRNA-binding site is contributed by Tyr-14. The active-site Proton acceptor is the His-19. Residues Tyr-64, Asn-66, and Asn-112 each contribute to the tRNA site.

The protein belongs to the PTH family. In terms of assembly, monomer.

The protein localises to the cytoplasm. The catalysed reaction is an N-acyl-L-alpha-aminoacyl-tRNA + H2O = an N-acyl-L-amino acid + a tRNA + H(+). Hydrolyzes ribosome-free peptidyl-tRNAs (with 1 or more amino acids incorporated), which drop off the ribosome during protein synthesis, or as a result of ribosome stalling. In terms of biological role, catalyzes the release of premature peptidyl moieties from peptidyl-tRNA molecules trapped in stalled 50S ribosomal subunits, and thus maintains levels of free tRNAs and 50S ribosomes. The chain is Peptidyl-tRNA hydrolase from Geobacillus kaustophilus (strain HTA426).